The chain runs to 594 residues: Arginine--tRNA ligase (594 aa).

A 'HIGH' region motif is present at residues Ala-139 to His-149.

Belongs to the class-I aminoacyl-tRNA synthetase family. In terms of assembly, monomer.

Its subcellular location is the cytoplasm. It catalyses the reaction tRNA(Arg) + L-arginine + ATP = L-arginyl-tRNA(Arg) + AMP + diphosphate. The chain is Arginine--tRNA ligase from Burkholderia pseudomallei (strain 1106a).